The sequence spans 249 residues: Small ribosomal subunit protein uS2 (249 aa).

It belongs to the universal ribosomal protein uS2 family.

This Chlorobaculum tepidum (strain ATCC 49652 / DSM 12025 / NBRC 103806 / TLS) (Chlorobium tepidum) protein is Small ribosomal subunit protein uS2.